The following is a 236-amino-acid chain: Phosphoribosylaminoimidazole-succinocarboxamide synthase (236 aa).

This sequence belongs to the SAICAR synthetase family.

The catalysed reaction is 5-amino-1-(5-phospho-D-ribosyl)imidazole-4-carboxylate + L-aspartate + ATP = (2S)-2-[5-amino-1-(5-phospho-beta-D-ribosyl)imidazole-4-carboxamido]succinate + ADP + phosphate + 2 H(+). The protein operates within purine metabolism; IMP biosynthesis via de novo pathway; 5-amino-1-(5-phospho-D-ribosyl)imidazole-4-carboxamide from 5-amino-1-(5-phospho-D-ribosyl)imidazole-4-carboxylate: step 1/2. This is Phosphoribosylaminoimidazole-succinocarboxamide synthase from Coprothermobacter proteolyticus (strain ATCC 35245 / DSM 5265 / OCM 4 / BT).